The following is a 215-amino-acid chain: Autophagy-related protein 101 (215 aa).

The tract at residues 124-147 (PVGKSHHSKLVMDPGEASEERSSR) is disordered.

The protein belongs to the ATG101 family. In terms of assembly, interacts with ATG11 and ATG13A.

The protein localises to the cytoplasmic vesicle. It is found in the autophagosome. In terms of biological role, accessory protein involved in autophagy. Acts as a scaffold protein of the ATG1-ATG13 complex for faithful delivery of autophagic vesicles to the vacuole. Required for selective mitophagy. This chain is Autophagy-related protein 101, found in Arabidopsis thaliana (Mouse-ear cress).